A 323-amino-acid polypeptide reads, in one-letter code: uncharacterized protein (323 aa).

An N-terminal signal peptide occupies residues 1–45 (MLATLSQIRAWSTEHLIDAAGYWTETADRWEDVFLQMRNQAHAIA). Residues 186 to 227 (FKQDGPTPPPPGAPHPSGGADGPYSDPITSMMLPPAGTEAPV) are disordered. 2 helical membrane-spanning segments follow: residues 269 to 289 (SAEW…VVGT) and 290 to 310 (ALAI…LLGV).

The protein localises to the cell membrane. This is an uncharacterized protein from Mycobacterium tuberculosis (strain CDC 1551 / Oshkosh).